Here is a 626-residue protein sequence, read N- to C-terminus: MPSIAKLPDIVANKISAGEVVQRPASVVKELLENSIDSGASAITVVIKEAGRQLVRIIDNGCGMDSDDALLSVERFATSKISDVDDLNALRTLGFRGEALASISSVSHFELKTRRQSEPVGIQLISNGGEIEGPQPAQCEPGTSISVRNLFFNVPARRKFLKSNATEFKHIHETVKAFVLAYPEIEWRLINDDHELFYFRTPDVRERLSHFYGEGFGESLIEVTEENDYMTIGGYLGKPGMMVRQKYDQYFYINRRLIQNRMLVQAVQQAYAELLEERQSPFALLFLGLDPSLVDVNVHPAKLEVKFEDEKSIRSMVYPVVKRAVRTADFSPEATVAPSPAPVGSHGIGLPESSSRKLAYSDFSGKSSTTGDLYRNYRQGAFDLSGASVPPPSIDPVESSFGSGSGEPYPSMVQESLLTPSADQPSAADEQNPVAPDKEPKIWQLHNKYIICQIKTGLMIIDQHVAHERVLYERAIDVMNEAVPNSQQLLFPQKIDLKPWQYEVYEEISEELYRLGFTIRPFGGLSVMIEGVPPDVRDGNEATILQDMIAEYQENASKLKLEKRDNLAKSYSCRNAIMTGQKLDVEQMRMLIDRLFATRMPYVCPHGRPVIIRLSLGELDRMFGRT.

2 disordered regions span residues 385–413 and 418–437; these read SGASVPPPSIDPVESSFGSGSGEPYPSMV and LTPSADQPSAADEQNPVAPD.

It belongs to the DNA mismatch repair MutL/HexB family.

This protein is involved in the repair of mismatches in DNA. It is required for dam-dependent methyl-directed DNA mismatch repair. May act as a 'molecular matchmaker', a protein that promotes the formation of a stable complex between two or more DNA-binding proteins in an ATP-dependent manner without itself being part of a final effector complex. This chain is DNA mismatch repair protein MutL, found in Chlorobaculum parvum (strain DSM 263 / NCIMB 8327) (Chlorobium vibrioforme subsp. thiosulfatophilum).